Reading from the N-terminus, the 322-residue chain is Breast cancer metastasis-suppressor 1-like protein (322 aa).

Basic and acidic residues predominate over residues 1–16; that stretch reads MPVHSREKKESNHNDM. Residues 1 to 56 are disordered; it reads MPVHSREKKESNHNDMEVDYPENEGTSSEEDDSDSSSGSEEGDSSEMDDEDCERRR. A compositionally biased stretch (acidic residues) spans 17 to 51; that stretch reads EVDYPENEGTSSEEDDSDSSSGSEEGDSSEMDDED. 2 coiled-coil regions span residues 50–82 and 147–178; these read EDCERRRMECLDEMSNLEKQFTDLKDQLYKERL and EKLLLYDTVQSELEEKIRRLEEDRHSIDITSE.

The protein belongs to the BRMS1 family.

Its subcellular location is the nucleus. Functionally, involved in the histone deacetylase (HDAC1)-dependent transcriptional repression activity. The sequence is that of Breast cancer metastasis-suppressor 1-like protein (brms1l) from Xenopus tropicalis (Western clawed frog).